The chain runs to 317 residues: Protoheme IX farnesyltransferase (317 aa).

Transmembrane regions (helical) follow at residues 44 to 64 (IGLI…ANTF), 93 to 113 (HASV…WVLC), 116 to 136 (VLAG…YTKY), 143 to 163 (LNIV…WAVI), 178 to 198 (AIVL…ALAM), 221 to 241 (VTRQ…LLIP), 243 to 263 (ASWI…VMAV), and 288 to 308 (LAVY…TIGG).

It belongs to the UbiA prenyltransferase family. Protoheme IX farnesyltransferase subfamily.

The protein resides in the cell membrane. It catalyses the reaction heme b + (2E,6E)-farnesyl diphosphate + H2O = Fe(II)-heme o + diphosphate. The protein operates within porphyrin-containing compound metabolism; heme O biosynthesis; heme O from protoheme: step 1/1. In terms of biological role, converts heme B (protoheme IX) to heme O by substitution of the vinyl group on carbon 2 of heme B porphyrin ring with a hydroxyethyl farnesyl side group. This chain is Protoheme IX farnesyltransferase, found in Corynebacterium diphtheriae (strain ATCC 700971 / NCTC 13129 / Biotype gravis).